The chain runs to 292 residues: 11-beta-hydroxysteroid dehydrogenase 1 (292 aa).

At 1 to 7 the chain is on the cytoplasmic side; the sequence is MAFMKKY. A helical; Signal-anchor for type II membrane protein transmembrane segment spans residues 8–24; sequence LLPILGIFLAYYYYSAN. Topologically, residues 25-292 are lumenal; the sequence is EEFRPEMLRG…KYNMERFINN (268 aa). NADP(+) contacts are provided by residues 41-67 and 92-93; these read GASK…TARS and TM. A glycan (N-linked (GlcNAc...) asparagine) is linked at Asn-95. 119-121 contacts NADP(+); that stretch reads NHI. Ser-170 lines the substrate pocket. Tyr-183 serves as the catalytic Proton acceptor. 183–187 lines the NADP(+) pocket; it reads YSASK. Asn-207 carries N-linked (GlcNAc...) asparagine glycosylation. Residues 216–222 and 218–222 contribute to the NADP(+) site; these read GLIDTDT and IDTDT.

Belongs to the short-chain dehydrogenases/reductases (SDR) family. As to quaternary structure, homodimer. In terms of tissue distribution, liver, kidney, lung, hypothalamus, anterior pituitary and placenta.

The protein localises to the endoplasmic reticulum membrane. It carries out the reaction an 11beta-hydroxysteroid + NADP(+) = an 11-oxosteroid + NADPH + H(+). The enzyme catalyses corticosterone + NADP(+) = 11-dehydrocorticosterone + NADPH + H(+). It catalyses the reaction cortisone + NADPH + H(+) = cortisol + NADP(+). The catalysed reaction is a 7beta-hydroxysteroid + NADP(+) = a 7-oxosteroid + NADPH + H(+). It carries out the reaction 7-oxocholesterol + NADPH + H(+) = 7beta-hydroxycholesterol + NADP(+). The enzyme catalyses chenodeoxycholate + NADP(+) = 7-oxolithocholate + NADPH + H(+). It catalyses the reaction 7-oxolithocholate + NADPH + H(+) = ursodeoxycholate + NADP(+). The catalysed reaction is glycochenodeoxycholate + NADP(+) = 7-oxoglycolithocholate + NADPH + H(+). It carries out the reaction taurochenodeoxycholate + NADP(+) = 7-oxotaurolithocholate + NADPH + H(+). The enzyme catalyses tauroursodeoxycholate + NADP(+) = 7-oxotaurolithocholate + NADPH + H(+). It catalyses the reaction glycoursodeoxycholate + NADP(+) = 7-oxoglycolithocholate + NADPH + H(+). The catalysed reaction is 7-oxopregnenolone + NADPH + H(+) = 7beta-hydroxypregnenolone + NADP(+). It carries out the reaction 3beta,7alpha-dihydroxyandrost-5-en-17-one + NADP(+) = 3beta-hydroxy-5-androstene-7,17-dione + NADPH + H(+). The enzyme catalyses 3beta-hydroxy-5-androstene-7,17-dione + NADPH + H(+) = 3beta,7beta-dihydroxyandrost-5-en-17-one + NADP(+). It catalyses the reaction 3beta-hydroxy-5alpha-androstane-7,17-dione + NADPH + H(+) = 3beta,7beta-dihydroxy-5alpha-androstan-17-one + NADP(+). Controls the reversible conversion of biologically active glucocorticoids such as cortisone to cortisol, and 11-dehydrocorticosterone to corticosterone in the presence of NADP(H). Participates in the corticosteroid receptor-mediated anti-inflammatory response, as well as metabolic and homeostatic processes. Plays a role in the secretion of aqueous humor in the eye, maintaining a normotensive, intraocular environment. Bidirectional in vitro, predominantly functions as a reductase in vivo, thereby increasing the concentration of active glucocorticoids. It has broad substrate specificity, besides glucocorticoids, it accepts other steroid and sterol substrates. Interconverts 7-oxo- and 7-hydroxy-neurosteroids such as 7-oxopregnenolone and 7beta-hydroxypregnenolone, 7-oxodehydroepiandrosterone (3beta-hydroxy-5-androstene-7,17-dione) and 7beta-hydroxydehydroepiandrosterone (3beta,7beta-dihydroxyandrost-5-en-17-one), among others. Catalyzes the stereo-specific conversion of the major dietary oxysterol, 7-ketocholesterol (7-oxocholesterol), into the more polar 7-beta-hydroxycholesterol metabolite. 7-oxocholesterol is one of the most important oxysterols, it participates in several events such as induction of apoptosis, accumulation in atherosclerotic lesions, lipid peroxidation, and induction of foam cell formation. Mediates the 7-oxo reduction of 7-oxolithocholate mainly to chenodeoxycholate, and to a lesser extent to ursodeoxycholate, both in its free form and when conjugated to glycine or taurine, providing a link between glucocorticoid activation and bile acid metabolism. Catalyzes the synthesis of 7-beta-25-dihydroxycholesterol from 7-oxo-25-hydroxycholesterol in vitro, which acts as a ligand for the G-protein-coupled receptor (GPCR) Epstein-Barr virus-induced gene 2 (EBI2) and may thereby regulate immune cell migration. This chain is 11-beta-hydroxysteroid dehydrogenase 1 (HSD11B1), found in Ovis aries (Sheep).